Reading from the N-terminus, the 262-residue chain is Acetylglutamate kinase (262 aa).

Residues 46–47 (GG), arginine 68, and asparagine 160 each bind substrate.

Belongs to the acetylglutamate kinase family. ArgB subfamily.

It localises to the cytoplasm. It catalyses the reaction N-acetyl-L-glutamate + ATP = N-acetyl-L-glutamyl 5-phosphate + ADP. Its pathway is amino-acid biosynthesis; L-arginine biosynthesis; N(2)-acetyl-L-ornithine from L-glutamate: step 2/4. In terms of biological role, catalyzes the ATP-dependent phosphorylation of N-acetyl-L-glutamate. This chain is Acetylglutamate kinase, found in Shewanella amazonensis (strain ATCC BAA-1098 / SB2B).